The primary structure comprises 1529 residues: MVVILWGWNENRFNTLDQVISFDFIEENKKLYLKILENEKQQKIYNISNLIGRRMDNYRDNNNNNGNGSNINNNGIIINSSMGSQYFNLNKGIIIVESDNETFLIEEIDYLGKFPILKQFIKCEEFIGISTLEIISNIEKQLSNLVNLKSNTTEQTDRKYKTNLIDFKESIIQLEKDCKNLLKQSNLINPSIKYSVVKSVKFLLKEIKFEFYHGDINIKRIELFQQLKKFLKIHFWNNPNLILNSGSNIDMTDSNDSISSEEINSPNDLNLSLSSFPSISSPSNSSYNNINTLTFSNNNNNNNNNSNNNNNNNNNNNNNNSIINSNNNNNSNNNSNISNSSNNNNNNSNNSNNISINVSKTGNNSVINSPTQSSSCYIDCDDTMSNYTDCTNTTNTNSTTTTTTTTTTYGNNLNVYNNNNNNNTNNNNNNVPYKKPALKMMKSPSFKIQLIQEVYLEIMDQCKKIQNYLYELLDTYLTDEEYINNNNNNNNKDISILFENNTSYCIAQEIFISLIKNSNDFLYQVQLIDLTDTRKKSKELSEVSNQLFYSTQQLFPSISDHLDFIEMDIFTNNNTTTTTTTTTTTTNTTTNPSNTIKSSHSSLLSSSYSSSKDDDIVLTINKVLSKLDTFSKEYTKLIGNNLSSNYYVDSGNNNESVSSPKCGLFLSHSLSTDSPMTYVKRNTSSGSSASTSSYTTPVSSSASLSFSSSTQTPSSAASQHHIQQILQQQQQQQQQQQQQQQQQQPQQIQSQSQQQHQQQQQQQQQQQQQQQQQQQQQQQQQQQQIQSQSQQQQQLNRKPHYSSISPTSMLVYNATGGKFGVVNQNNNSAESTPTFQLNTMDILNSLMGKEGQNSNTNNANNPNNNNNNNNNNNNNNNNNNNNNNNNENKNENKNETNKSGHNYNNSSTSTLSSSTTIGDLANVSSTNSPNSSTPNLLLPPHQFHNHNREYNHSHHHLLSSSSNNVMINNRSIGKSFSTGNFSQPQPIMPSNGIGGSGGGGLGTTLSVGNGGIVGGLQSRSSSFEENQLQYAIESFMEVYNHLTSKDKVDTSIWLEEEKEDINVYYINNTNIDDKFYRSIKYASLNQLILKLTCESNTELRFTKTFITTYRSFTTGDIFLMKLIQRYFTPNLKNIVPYQFVQKIQIPIQLRVLNVLRLWIEQYPSDFQQPPQITTQSTQPIQNSTTQPQPQPQPQQPQPQLQQSTNLQNSTIQQPSLFKMLTAFLNSTRRNGHGQYSDLILKKFKQQKQKDRLQLPIINNGQGIPKAKIFWMKYSTEFIFSQSSTDIAEQLTLLDFDSYKSIEEIELLNQAWSKPDQKTNTPNIASMVNRFNSFSSFVSWAILRENDIKQRSKMMLKMIKICYALYKLSNFNGLLAGLSGLMASGVYRLNHTKSLISKQYQKKFDFLCKFLDTKKSHKVYRDIIHSTCPPLIPYLGIYLTDLTFIEDGNQDEIKGLINFKKREMIFNTILEIQQYQQQGYTIKPKPSVLGFLCELPHMSDKKKFEDDTYEQSILLEPKNSTKLEVMNAKK.

Residues 135-186 are a coiled coil; the sequence is ISNIEKQLSNLVNLKSNTTEQTDRKYKTNLIDFKESIIQLEKDCKNLLKQSN. Disordered stretches follow at residues 290–357, 576–600, 680–724, 847–948, and 1168–1206; these read INTL…ISIN, TTTT…KSSH, KRNT…HIQQ, MGKE…NHNR, and QPPQ…STNL. Composition is skewed to low complexity over residues 576 to 591, 683 to 724, and 853 to 887; these read TTTT…TTTN, TSSG…HIQQ, and NSNT…NNNE. Coiled-coil stretches lie at residues 722–798 and 871–898; these read IQQI…LNRK and NNNN…ETNK. Residues 888-898 show a composition bias toward basic and acidic residues; sequence NKNENKNETNK. Composition is skewed to low complexity over residues 906–916, 924–940, 1168–1187, and 1197–1206; these read SSTSTLSSSTT, SSTN…LLPP, QPPQ…TTQP, and QPQLQQSTNL. An N-terminal Ras-GEF domain is found at 1075 to 1205; that stretch reads FYRSIKYASL…PQPQLQQSTN (131 aa). Residues 1282 to 1517 enclose the Ras-GEF domain; the sequence is SSTDIAEQLT…YEQSILLEPK (236 aa).

The protein localises to the cytoplasm. Promotes the exchange of Ras-bound GDP by GTP. Involved in phagocytosis, fluid-phase endocytosis, regulation of macropinocytosis and control of cell movement. This chain is Ras guanine nucleotide exchange factor B (gefB), found in Dictyostelium discoideum (Social amoeba).